The sequence spans 1043 residues: Phosphatidylinositol 4,5-bisphosphate 3-kinase catalytic subunit delta isoform (1043 aa).

Positions 16-105 (ESQSVVVDFL…LPVLRLVARE (90 aa)) constitute a PI3K-ABD domain. A PI3K-RBD domain is found at 187–278 (NRALLVNVKF…GLTPHLTMVH (92 aa)). A disordered region spans residues 287–312 (DEQSNPAPQVQKPRAKPPPIPAKKPS). Positions 319–476 (LEQPFSIELI…SAAALVIYLP (158 aa)) constitute a C2 PI3K-type domain. One can recognise a PIK helical domain in the interval 496-673 (RHGERGRITE…GLIMEAYCRG (178 aa)). Tyr523 carries the post-translational modification Phosphotyrosine. The region spanning 744–1026 (CVEQCTFMDS…KFNEALRESW (283 aa)) is the PI3K/PI4K catalytic domain. The segment at 750–756 (FMDSKMK) is G-loop. Residues 889 to 897 (GIGDRHSDN) are catalytic loop. Residues 908–934 (HIDFGHFLGNFKTKFGINRERVPFILT) are activation loop. Position 1038 is a phosphoserine; by autocatalysis (Ser1038).

It belongs to the PI3/PI4-kinase family. Heterodimer of a catalytic subunit PIK3CD and a p85 regulatory subunit (PIK3R1, PIK3R2 or PIK3R3). Interacts with ERAS and HRAS. In terms of processing, autophosphorylation on Ser-1038 results in the almost complete inactivation of the lipid kinase activity. As to expression, abundantly expressed in adult mouse spleen as well as in testis. Isoform 1 is expressed in spleen and lung (at protein level). Isoform 1 is expressed predominantly in leukocytes.

Its subcellular location is the cytoplasm. It catalyses the reaction a 1,2-diacyl-sn-glycero-3-phospho-(1D-myo-inositol-4,5-bisphosphate) + ATP = a 1,2-diacyl-sn-glycero-3-phospho-(1D-myo-inositol-3,4,5-trisphosphate) + ADP + H(+). It carries out the reaction a 1,2-diacyl-sn-glycero-3-phospho-(1D-myo-inositol) + ATP = a 1,2-diacyl-sn-glycero-3-phospho-(1D-myo-inositol-3-phosphate) + ADP + H(+). The enzyme catalyses 1-octadecanoyl-2-(5Z,8Z,11Z,14Z)-eicosatetraenoyl-sn-glycero-3-phospho-1D-myo-inositol 4,5-bisphosphate + ATP = 1-octadecanoyl-2-(5Z,8Z,11Z,14Z-eicosatetraenoyl)-sn-glycero-3-phospho-(1D-myo-inositol 3,4,5-triphosphate) + ADP + H(+). It participates in phospholipid metabolism; phosphatidylinositol phosphate biosynthesis. Activated by growth factors and cytokine receptors through a tyrosine-kinase-dependent mechanism. Activated by RAS. IC87114 inhibits lipid kinase activity and is selective in cells at doses up to 5-10 uM. Among other effects, IC87114 reduces allergic responses, prevents the recruitment of antigen-specific T cells into target tissue, and affects natural killer cell chemotaxis. Phosphoinositide-3-kinase (PI3K) phosphorylates phosphatidylinositol (PI) and its phosphorylated derivatives at position 3 of the inositol ring to produce 3-phosphoinositides. Uses ATP and PtdIns(4,5)P2 (phosphatidylinositol 4,5-bisphosphate) to generate phosphatidylinositol 3,4,5-trisphosphate (PIP3). PIP3 plays a key role by recruiting PH domain-containing proteins to the membrane, including AKT1 and PDPK1, activating signaling cascades involved in cell growth, survival, proliferation, motility and morphology. Mediates immune responses. Plays a role in B-cell development, proliferation, migration, and function. Required for B-cell receptor (BCR) signaling. Mediates B-cell proliferation response to anti-IgM, anti-CD40 and IL4 stimulation. Promotes cytokine production in response to TLR4 and TLR9. Required for antibody class switch mediated by TLR9. Involved in the antigen presentation function of B-cells. Involved in B-cell chemotaxis in response to CXCL13 and sphingosine 1-phosphate (S1P). Required for proliferation, signaling and cytokine production of naive, effector and memory T-cells. Required for T-cell receptor (TCR) signaling. Mediates TCR signaling events at the immune synapse. Activation by TCR leads to antigen-dependent memory T-cell migration and retention to antigenic tissues. Together with PIK3CG participates in T-cell development. Contributes to T-helper cell expansion and differentiation. Required for T-cell migration mediated by homing receptors SELL/CD62L, CCR7 and S1PR1 and antigen dependent recruitment of T-cells. Together with PIK3CG is involved in natural killer (NK) cell development and migration towards the sites of inflammation. Participates in NK cell receptor activation. Plays a role in NK cell maturation and cytokine production. Together with PIK3CG is involved in neutrophil chemotaxis and extravasation. Together with PIK3CG participates in neutrophil respiratory burst. Plays important roles in mast-cell development and mast cell mediated allergic response. Involved in stem cell factor (SCF)-mediated proliferation, adhesion and migration. Required for allergen-IgE-induced degranulation and cytokine release. The lipid kinase activity is required for its biological function. In Mus musculus (Mouse), this protein is Phosphatidylinositol 4,5-bisphosphate 3-kinase catalytic subunit delta isoform (Pik3cd).